Reading from the N-terminus, the 201-residue chain is GTP cyclohydrolase 1 (201 aa).

The disordered stretch occupies residues 1–20 (MDATVKKMSPETSRPSREEA). Residues Cys91, His94, and Cys162 each contribute to the Zn(2+) site.

The protein belongs to the GTP cyclohydrolase I family. As to quaternary structure, homomer.

It catalyses the reaction GTP + H2O = 7,8-dihydroneopterin 3'-triphosphate + formate + H(+). Its pathway is cofactor biosynthesis; 7,8-dihydroneopterin triphosphate biosynthesis; 7,8-dihydroneopterin triphosphate from GTP: step 1/1. The chain is GTP cyclohydrolase 1 from Allorhizobium ampelinum (strain ATCC BAA-846 / DSM 112012 / S4) (Agrobacterium vitis (strain S4)).